The primary structure comprises 378 residues: S-adenosylmethionine:tRNA ribosyltransferase-isomerase (378 aa).

This sequence belongs to the QueA family. Monomer.

It is found in the cytoplasm. The catalysed reaction is 7-aminomethyl-7-carbaguanosine(34) in tRNA + S-adenosyl-L-methionine = epoxyqueuosine(34) in tRNA + adenine + L-methionine + 2 H(+). It functions in the pathway tRNA modification; tRNA-queuosine biosynthesis. In terms of biological role, transfers and isomerizes the ribose moiety from AdoMet to the 7-aminomethyl group of 7-deazaguanine (preQ1-tRNA) to give epoxyqueuosine (oQ-tRNA). This is S-adenosylmethionine:tRNA ribosyltransferase-isomerase from Prochlorococcus marinus (strain MIT 9312).